Reading from the N-terminus, the 79-residue chain is Endothelin-2 (79 aa).

Positions P1 to R23 are disordered. The interval C24–L39 is endothelin-like. The segment at S51–S79 is disordered.

It belongs to the endothelin/sarafotoxin family.

Its subcellular location is the secreted. Functionally, endothelins are endothelium-derived vasoconstrictor peptides. This Macaca fascicularis (Crab-eating macaque) protein is Endothelin-2 (EDN2).